The sequence spans 257 residues: 3-oxo-5-alpha-steroid 4-dehydrogenase 1 (257 aa).

6 consecutive transmembrane segments (helical) span residues 7–27 (FLLDALAYLECALGVVCYVLL), 50–70 (AAWTVQELPSLALPLLACAGA), 84–104 (ILLAMFLVHYAQRSLVFPFLI), 109–129 (PMPLYAFLLAFIFCTYNGYLQ), 149–169 (FLTGSALWLIGMLINIHSDHV), and 208–228 (ALASWSIQGWAFAVFTFCVLF).

Belongs to the steroid 5-alpha reductase family.

The protein resides in the microsome membrane. Its subcellular location is the endoplasmic reticulum membrane. It catalyses the reaction a 3-oxo-5alpha-steroid + NADP(+) = a 3-oxo-Delta(4)-steroid + NADPH + H(+). The catalysed reaction is 5alpha-pregnane-3,20-dione + NADP(+) = progesterone + NADPH + H(+). The enzyme catalyses 17beta-hydroxy-5alpha-androstan-3-one + NADP(+) = testosterone + NADPH + H(+). It carries out the reaction androst-4-ene-3,17-dione + NADPH + H(+) = 5alpha-androstan-3,17-dione + NADP(+). Converts testosterone into 5-alpha-dihydrotestosterone and progesterone or corticosterone into their corresponding 5-alpha-3-oxosteroids. It plays a central role in sexual differentiation and androgen physiology. The sequence is that of 3-oxo-5-alpha-steroid 4-dehydrogenase 1 (SRD5A1) from Bos taurus (Bovine).